The primary structure comprises 457 residues: Chromosomal replication initiator protein DnaA (457 aa).

The domain I, interacts with DnaA modulators stretch occupies residues Met-1–Phe-75. A domain II region spans residues Phe-75–Ala-118. A disordered region spans residues Glu-87–Gly-108. A compositionally biased stretch (basic and acidic residues) spans Asn-91–Thr-103. A domain III, AAA+ region region spans residues Thr-119 to Ser-335. ATP-binding residues include Gly-163, Gly-165, Lys-166, and Thr-167. Positions Ser-336 to Lys-457 are domain IV, binds dsDNA.

It belongs to the DnaA family. In terms of assembly, oligomerizes as a right-handed, spiral filament on DNA at oriC.

The protein localises to the cytoplasm. Plays an essential role in the initiation and regulation of chromosomal replication. ATP-DnaA binds to the origin of replication (oriC) to initiate formation of the DNA replication initiation complex once per cell cycle. Binds the DnaA box (a 9 base pair repeat at the origin) and separates the double-stranded (ds)DNA. Forms a right-handed helical filament on oriC DNA; dsDNA binds to the exterior of the filament while single-stranded (ss)DNA is stabiized in the filament's interior. The ATP-DnaA-oriC complex binds and stabilizes one strand of the AT-rich DNA unwinding element (DUE), permitting loading of DNA polymerase. After initiation quickly degrades to an ADP-DnaA complex that is not apt for DNA replication. Binds acidic phospholipids. The polypeptide is Chromosomal replication initiator protein DnaA (Clostridium perfringens (strain SM101 / Type A)).